The sequence spans 506 residues: Maturase K (506 aa).

It belongs to the intron maturase 2 family. MatK subfamily.

Its subcellular location is the plastid. The protein localises to the chloroplast. In terms of biological role, usually encoded in the trnK tRNA gene intron. Probably assists in splicing its own and other chloroplast group II introns. The polypeptide is Maturase K (Angiopteris evecta (Mule's foot fern)).